A 400-amino-acid chain; its full sequence is Phosphoglycerate kinase (400 aa).

Substrate-binding positions include 23 to 25 (DLN), Arg-38, 61 to 64 (HFGR), Arg-120, and Arg-153. Residues Lys-203, Glu-325, and 355–358 (GGDT) contribute to the ATP site.

It belongs to the phosphoglycerate kinase family. In terms of assembly, monomer.

It is found in the cytoplasm. The enzyme catalyses (2R)-3-phosphoglycerate + ATP = (2R)-3-phospho-glyceroyl phosphate + ADP. The protein operates within carbohydrate degradation; glycolysis; pyruvate from D-glyceraldehyde 3-phosphate: step 2/5. The sequence is that of Phosphoglycerate kinase from Allorhizobium ampelinum (strain ATCC BAA-846 / DSM 112012 / S4) (Agrobacterium vitis (strain S4)).